The sequence spans 308 residues: MTITIEQPHLDAIADRKVAGGGGGDNAAELVLDGGFVVPDSNAFGNAFRNYEAESERKETVEEFYRVNHINQTYDFVRRMREEYGRVDKTEMGIWECIELLNEFIDDSDPDLDMPQIEHLLQTAEAIRKDFPDEDWLHLTGLIHDLGKVLLHPSFGELPQWSVVGDTFPVGCAFDECNVHFKYFKENPDYLNPKLNTKFGAYSEGCGLDNVLMSWGHDDYMYLVAKENKTTLPSAGLFIIRYHSFYPLHKHGAYMHLMNDEDKENLKWLRVFNKYDLYSKSNERIDVEKVKPYYMSLIEKYFPAKLRW.

Substrate contacts are provided by residues R49 and 106 to 108; that span reads DDS. Fe cation contacts are provided by H119, H144, and D145. Substrate is bound by residues K148 and 165–166; that span reads GD. Positions 217, 243, and 276 each coordinate Fe cation. 243 to 244 serves as a coordination point for substrate; sequence HS.

The protein belongs to the myo-inositol oxygenase family. It depends on Fe cation as a cofactor.

It is found in the cytoplasm. It carries out the reaction myo-inositol + O2 = D-glucuronate + H2O + H(+). It participates in polyol metabolism; myo-inositol degradation into D-glucuronate; D-glucuronate from myo-inositol: step 1/1. Functionally, involved in the biosynthesis of UDP-glucuronic acid (UDP-GlcA), providing nucleotide sugars for cell-wall polymers. May be also involved in plant ascorbate biosynthesis. This chain is Probable inositol oxygenase, found in Oryza sativa subsp. japonica (Rice).